We begin with the raw amino-acid sequence, 401 residues long: Adaptive-response sensory kinase SasA (401 aa).

A Histidine kinase domain is found at 175–400; sequence MLVHDLRNPL…WFHFTLPVYP (226 aa). Residue H178 is modified to Phosphohistidine; by autocatalysis.

Homooligomerizes. Interacts with KaiC. Participates in the KaiABC clock complex, whose core is composed of a KaiC homohexamer, 6 KaiB and up to 6 KaiA dimers. SasA and KaiB(fs) compete to bind to KaiC.

It carries out the reaction ATP + protein L-histidine = ADP + protein N-phospho-L-histidine.. In terms of biological role, member of the two-component regulatory system SasA/RpaA involved in genome-wide circadian gene expression. One of several clock output pathways. Participates in the Kai clock protein complex, the main circadian regulator in cyanobacteria, via its interaction with KaiC. KaiC enhances the autophosphorylation activity of SasA, which then transfers its phosphate group to RpaA to activate it. In addition to its output function, recruits fold-shifted KaiB (KaiB(fs)) to KaiC to cooperatively form the KaiB(6):KaiC(6) complex (independent of SasA kinase activity). Required for robustness of the circadian rhythm of gene expression and is involved in clock output, also required for adaptation to light/dark cycles. This chain is Adaptive-response sensory kinase SasA, found in Nostoc sp. (strain PCC 7120 / SAG 25.82 / UTEX 2576).